An 872-amino-acid chain; its full sequence is Bifunctional heparan sulfate N-deacetylase/N-sulfotransferase 4 (872 aa).

Residues 1 to 13 are Cytoplasmic-facing; sequence MNLILKFRRSFRT. Residues 14–34 form a helical; Signal-anchor for type II membrane protein membrane-spanning segment; sequence LIVLLATFCLVSILISAYFLY. The Lumenal segment spans residues 35-872; it reads SGYKQEMTLI…WLRQELQKVR (838 aa). The heparan sulfate N-deacetylase 4 stretch occupies residues 36–588; that stretch reads GYKQEMTLIE…KRHKDIWSRE (553 aa). N-linked (GlcNAc...) asparagine glycans are attached at residues asparagine 226, asparagine 341, and asparagine 391. A heparan sulfate N-sulfotransferase 4 region spans residues 589–872; that stretch reads KTCDHLPKFL…WLRQELQKVR (284 aa). Lysine 604 serves as the catalytic For sulfotransferase activity. A 3'-phosphoadenylyl sulfate-binding site is contributed by 604-608; the sequence is KTGTT. Asparagine 657 carries N-linked (GlcNAc...) asparagine glycosylation. A 3'-phosphoadenylyl sulfate-binding site is contributed by serine 702. Asparagine 793 carries N-linked (GlcNAc...) asparagine glycosylation. Cysteine 808 and cysteine 818 form a disulfide bridge. 823–827 lines the 3'-phosphoadenylyl sulfate pocket; that stretch reads KGRKY.

The protein belongs to the sulfotransferase 1 family. NDST subfamily. In terms of assembly, monomer. As to expression, expressed at low level in brain and throughout embryogenesis. Not expressed in other tissues.

The protein resides in the golgi apparatus membrane. It carries out the reaction alpha-D-glucosaminyl-[heparan sulfate](n) + 3'-phosphoadenylyl sulfate = N-sulfo-alpha-D-glucosaminyl-[heparan sulfate](n) + adenosine 3',5'-bisphosphate + 2 H(+). The protein operates within glycan metabolism; heparan sulfate biosynthesis. It participates in glycan metabolism; heparin biosynthesis. Its function is as follows. Essential bifunctional enzyme that catalyzes both the N-deacetylation and the N-sulfation of glucosamine (GlcNAc) of the glycosaminoglycan in heparan sulfate. Modifies the GlcNAc-GlcA disaccharide repeating sugar backbone to make N-sulfated heparosan, a prerequisite substrate for later modifications in heparin biosynthesis. Has low deacetylase activity but high sulfotransferase activity. The protein is Bifunctional heparan sulfate N-deacetylase/N-sulfotransferase 4 (Ndst4) of Mus musculus (Mouse).